A 461-amino-acid polypeptide reads, in one-letter code: Cysteine--tRNA ligase (461 aa).

C28 contributes to the Zn(2+) binding site. A 'HIGH' region motif is present at residues 30–40 (ITIYDLCHIGH). 3 residues coordinate Zn(2+): C209, H234, and E238. The short motif at 266-270 (KMSKS) is the 'KMSKS' region element. Position 269 (K269) interacts with ATP.

This sequence belongs to the class-I aminoacyl-tRNA synthetase family. As to quaternary structure, monomer. It depends on Zn(2+) as a cofactor.

It is found in the cytoplasm. The catalysed reaction is tRNA(Cys) + L-cysteine + ATP = L-cysteinyl-tRNA(Cys) + AMP + diphosphate. This chain is Cysteine--tRNA ligase, found in Yersinia enterocolitica serotype O:8 / biotype 1B (strain NCTC 13174 / 8081).